The sequence spans 136 residues: Peptide methionine sulfoxide reductase MsrB (136 aa).

Residues 6-128 (EVSLYKELTD…NSAALSFTDE (123 aa)) form the MsrB domain. Residues cysteine 45, cysteine 48, cysteine 94, and cysteine 97 each coordinate Zn(2+). Cysteine 117 (nucleophile) is an active-site residue.

It belongs to the MsrB Met sulfoxide reductase family. Zn(2+) serves as cofactor.

The catalysed reaction is L-methionyl-[protein] + [thioredoxin]-disulfide + H2O = L-methionyl-(R)-S-oxide-[protein] + [thioredoxin]-dithiol. The chain is Peptide methionine sulfoxide reductase MsrB from Photorhabdus laumondii subsp. laumondii (strain DSM 15139 / CIP 105565 / TT01) (Photorhabdus luminescens subsp. laumondii).